The following is a 427-amino-acid chain: Trigger factor (427 aa).

Residues 160–240 (GDTLIGDVTK…VKEVKRLELP (81 aa)) form the PPIase FKBP-type domain.

The protein belongs to the FKBP-type PPIase family. Tig subfamily.

The protein resides in the cytoplasm. The enzyme catalyses [protein]-peptidylproline (omega=180) = [protein]-peptidylproline (omega=0). Its function is as follows. Involved in protein export. Acts as a chaperone by maintaining the newly synthesized protein in an open conformation. Functions as a peptidyl-prolyl cis-trans isomerase. This Chlorobaculum parvum (strain DSM 263 / NCIMB 8327) (Chlorobium vibrioforme subsp. thiosulfatophilum) protein is Trigger factor.